Here is a 115-residue protein sequence, read N- to C-terminus: Large ribosomal subunit protein uL22 (115 aa).

Belongs to the universal ribosomal protein uL22 family. As to quaternary structure, part of the 50S ribosomal subunit.

Its function is as follows. This protein binds specifically to 23S rRNA; its binding is stimulated by other ribosomal proteins, e.g. L4, L17, and L20. It is important during the early stages of 50S assembly. It makes multiple contacts with different domains of the 23S rRNA in the assembled 50S subunit and ribosome. Functionally, the globular domain of the protein is located near the polypeptide exit tunnel on the outside of the subunit, while an extended beta-hairpin is found that lines the wall of the exit tunnel in the center of the 70S ribosome. The sequence is that of Large ribosomal subunit protein uL22 from Coxiella burnetii (strain CbuK_Q154) (Coxiella burnetii (strain Q154)).